Consider the following 350-residue polypeptide: Fe-S cluster assembly protein dre2 (350 aa).

Positions 23 to 156 are N-terminal SAM-like domain; that stretch reads TSFNLRTLLL…KPDHSASVAV (134 aa). A linker region spans residues 157–242; that stretch reads PLRLRRKDNS…EDTLLTEEDM (86 aa). Positions 165–209 are disordered; the sequence is NSKTTAVSNAGPPVSTVEVPVSGKRKSVDMTEDVPEKDVPKNDVP. Residues 190-208 are compositionally biased toward basic and acidic residues; the sequence is KSVDMTEDVPEKDVPKNDV. Residues Cys-252, Cys-263, Cys-266, and Cys-268 each contribute to the [2Fe-2S] cluster site. The tract at residues 252–268 is fe-S binding site A; the sequence is CAPRAGKRRRACKDCTC. Positions 313, 316, 324, and 327 each coordinate [4Fe-4S] cluster. Short sequence motifs (cx2C motif) lie at residues 313–316 and 324–327; these read CGNC and CDGC. The segment at 313-327 is fe-S binding site B; it reads CGNCSLGDAFRCDGC.

The protein belongs to the anamorsin family. As to quaternary structure, monomer. Interacts with TAH18. Interacts with MIA40. [2Fe-2S] cluster is required as a cofactor. The cofactor is [4Fe-4S] cluster.

The protein resides in the cytoplasm. It localises to the mitochondrion intermembrane space. Functionally, component of the cytosolic iron-sulfur (Fe-S) protein assembly (CIA) machinery required for the maturation of extramitochondrial Fe-S proteins. Part of an electron transfer chain functioning in an early step of cytosolic Fe-S biogenesis, facilitating the de novo assembly of a [4Fe-4S] cluster on the scaffold complex CFD1-NBP35. Electrons are transferred to DRE2 from NADPH via the FAD- and FMN-containing protein TAH18. TAH18-DRE2 are also required for the assembly of the diferric tyrosyl radical cofactor of ribonucleotide reductase (RNR), probably by providing electrons for reduction during radical cofactor maturation in the catalytic small subunit RNR2. This chain is Fe-S cluster assembly protein dre2, found in Sclerotinia sclerotiorum (strain ATCC 18683 / 1980 / Ss-1) (White mold).